A 212-amino-acid polypeptide reads, in one-letter code: Cytidylate kinase (212 aa).

An ATP-binding site is contributed by 7-15; sequence GPAASGKGT.

The protein belongs to the cytidylate kinase family. Type 1 subfamily.

Its subcellular location is the cytoplasm. It catalyses the reaction CMP + ATP = CDP + ADP. The catalysed reaction is dCMP + ATP = dCDP + ADP. This Rhodopseudomonas palustris (strain HaA2) protein is Cytidylate kinase.